A 437-amino-acid polypeptide reads, in one-letter code: Coiled-coil domain-containing protein 78 (437 aa).

Coiled coils occupy residues 83-114 (HLRE…LHGN), 147-287 (EELK…QRQE), and 360-408 (QRLQ…YKQE).

Belongs to the CCDC78 family.

The protein resides in the cytoplasm. It localises to the cytoskeleton. Its subcellular location is the microtubule organizing center. It is found in the centrosome. The protein localises to the centriole. The protein resides in the perinuclear region. It localises to the cell membrane. Its subcellular location is the sarcolemma. It is found in the sarcoplasmic reticulum. In terms of biological role, component of the deuterosome, a structure that promotes de novo centriole amplification in multiciliated cells that can generate more than 100 centrioles. Deuterosome-mediated centriole amplification occurs in terminally differentiated multiciliated cells (G1/0) and not in S phase. Essential for centriole amplification and is required for CEP152 localization to the deuterosome. In Mus musculus (Mouse), this protein is Coiled-coil domain-containing protein 78 (Ccdc78).